A 508-amino-acid chain; its full sequence is Photosystem II CP47 reaction center protein (508 aa).

Helical transmembrane passes span 21 to 36, 101 to 115, 140 to 156, 203 to 218, 237 to 252, and 457 to 472; these read SVHI…WAGS, IVLS…IWHW, GIHL…FGAF, IAAG…FHLS, VLSS…AFVV, and SFAL…HGAR.

The protein belongs to the PsbB/PsbC family. PsbB subfamily. In terms of assembly, PSII is composed of 1 copy each of membrane proteins PsbA, PsbB, PsbC, PsbD, PsbE, PsbF, PsbH, PsbI, PsbJ, PsbK, PsbL, PsbM, PsbT, PsbX, PsbY, PsbZ, Psb30/Ycf12, at least 3 peripheral proteins of the oxygen-evolving complex and a large number of cofactors. It forms dimeric complexes. Requires Binds multiple chlorophylls. PSII binds additional chlorophylls, carotenoids and specific lipids. as cofactor.

It is found in the plastid. Its subcellular location is the chloroplast thylakoid membrane. Functionally, one of the components of the core complex of photosystem II (PSII). It binds chlorophyll and helps catalyze the primary light-induced photochemical processes of PSII. PSII is a light-driven water:plastoquinone oxidoreductase, using light energy to abstract electrons from H(2)O, generating O(2) and a proton gradient subsequently used for ATP formation. The protein is Photosystem II CP47 reaction center protein of Pelargonium hortorum (Common geranium).